A 157-amino-acid polypeptide reads, in one-letter code: S-ribosylhomocysteine lyase (157 aa).

The Fe cation site is built by His54, His58, and Cys124.

The protein belongs to the LuxS family. In terms of assembly, homodimer. Fe cation is required as a cofactor.

It catalyses the reaction S-(5-deoxy-D-ribos-5-yl)-L-homocysteine = (S)-4,5-dihydroxypentane-2,3-dione + L-homocysteine. Its function is as follows. Involved in the synthesis of autoinducer 2 (AI-2) which is secreted by bacteria and is used to communicate both the cell density and the metabolic potential of the environment. The regulation of gene expression in response to changes in cell density is called quorum sensing. Catalyzes the transformation of S-ribosylhomocysteine (RHC) to homocysteine (HC) and 4,5-dihydroxy-2,3-pentadione (DPD). This chain is S-ribosylhomocysteine lyase, found in Lacticaseibacillus paracasei (strain ATCC 334 / BCRC 17002 / CCUG 31169 / CIP 107868 / KCTC 3260 / NRRL B-441) (Lactobacillus paracasei).